Here is a 368-residue protein sequence, read N- to C-terminus: 3-dehydroquinate synthase (368 aa).

NAD(+)-binding positions include 69–74 (DGEAYK), 103–107 (GVIGD), 127–128 (TT), Lys140, and Lys149. Zn(2+) contacts are provided by Glu182, His245, and His262.

The protein belongs to the sugar phosphate cyclases superfamily. Dehydroquinate synthase family. It depends on NAD(+) as a cofactor. Requires Co(2+) as cofactor. Zn(2+) serves as cofactor.

The protein localises to the cytoplasm. It carries out the reaction 7-phospho-2-dehydro-3-deoxy-D-arabino-heptonate = 3-dehydroquinate + phosphate. It functions in the pathway metabolic intermediate biosynthesis; chorismate biosynthesis; chorismate from D-erythrose 4-phosphate and phosphoenolpyruvate: step 2/7. In terms of biological role, catalyzes the conversion of 3-deoxy-D-arabino-heptulosonate 7-phosphate (DAHP) to dehydroquinate (DHQ). The chain is 3-dehydroquinate synthase from Pseudomonas aeruginosa (strain ATCC 15692 / DSM 22644 / CIP 104116 / JCM 14847 / LMG 12228 / 1C / PRS 101 / PAO1).